A 336-amino-acid polypeptide reads, in one-letter code: UPF0324 membrane protein lp_2841 (336 aa).

9 helical membrane-spanning segments follow: residues 5–22 (GILPGLVTSLVIAIISQG), 26–48 (FVPALGAATIAILLGIIGGNTFL), 84–106 (IGGFGVLFILCQMTITIVGALWL), 116–138 (VRMLMAGGNAVCGSSAIASIAPV), 150–172 (ITLVNLMGTVLMLTLPVLGMAVF), 204–226 (TVQFATIFKIMRIMMLVVVVLIF), 255–277 (WYVAGFLILCALNSLISLPAIIG), 282–304 (TISSWFEIIALAAIGLRLNLVNF), and 311–333 (LALYGLGVGTIQVVSALILITLL).

This sequence belongs to the UPF0324 family.

It localises to the cell membrane. This chain is UPF0324 membrane protein lp_2841, found in Lactiplantibacillus plantarum (strain ATCC BAA-793 / NCIMB 8826 / WCFS1) (Lactobacillus plantarum).